Here is a 230-residue protein sequence, read N- to C-terminus: N-(5'-phosphoribosyl)anthranilate isomerase (230 aa).

Belongs to the TrpF family.

It carries out the reaction N-(5-phospho-beta-D-ribosyl)anthranilate = 1-(2-carboxyphenylamino)-1-deoxy-D-ribulose 5-phosphate. The protein operates within amino-acid biosynthesis; L-tryptophan biosynthesis; L-tryptophan from chorismate: step 3/5. This chain is N-(5'-phosphoribosyl)anthranilate isomerase, found in Ralstonia nicotianae (strain ATCC BAA-1114 / GMI1000) (Ralstonia solanacearum).